The sequence spans 256 residues: Type III pantothenate kinase (256 aa).

Residue 6–13 (DCGNTNTV) coordinates ATP. 107 to 110 (GPDR) is a binding site for substrate. D109 functions as the Proton acceptor in the catalytic mechanism. Residue D129 coordinates K(+). Position 132 (T132) interacts with ATP. Residue T184 coordinates substrate.

This sequence belongs to the type III pantothenate kinase family. As to quaternary structure, homodimer. It depends on NH4(+) as a cofactor. K(+) is required as a cofactor.

It localises to the cytoplasm. The catalysed reaction is (R)-pantothenate + ATP = (R)-4'-phosphopantothenate + ADP + H(+). It functions in the pathway cofactor biosynthesis; coenzyme A biosynthesis; CoA from (R)-pantothenate: step 1/5. Catalyzes the phosphorylation of pantothenate (Pan), the first step in CoA biosynthesis. This Dinoroseobacter shibae (strain DSM 16493 / NCIMB 14021 / DFL 12) protein is Type III pantothenate kinase.